The primary structure comprises 1161 residues: DNA-directed RNA polymerase subunit beta' (1161 aa).

Cys60, Cys62, Cys75, and Cys78 together coordinate Zn(2+). Asp449, Asp451, and Asp453 together coordinate Mg(2+). Positions 790, 864, 871, and 874 each coordinate Zn(2+).

The protein belongs to the RNA polymerase beta' chain family. In terms of assembly, the RNAP catalytic core consists of 2 alpha, 1 beta, 1 beta' and 1 omega subunit. When a sigma factor is associated with the core the holoenzyme is formed, which can initiate transcription. Mg(2+) serves as cofactor. The cofactor is Zn(2+).

It catalyses the reaction RNA(n) + a ribonucleoside 5'-triphosphate = RNA(n+1) + diphosphate. In terms of biological role, DNA-dependent RNA polymerase catalyzes the transcription of DNA into RNA using the four ribonucleoside triphosphates as substrates. This chain is DNA-directed RNA polymerase subunit beta', found in Clostridioides difficile (strain 630) (Peptoclostridium difficile).